The primary structure comprises 407 residues: MSAVPLRNNKPGRAEVRSITVLGATGSIGESTMDLLRGAPERYRVEALTGNSNVQGLAKLAREFKPGFVAVADPARLNELRDALAGTGIACGAGESAIIEAAARPADWVMAAVSGAAGLKPALAAVDRGATVALANKECLVCAGDFFMQRAAQAGACILPADSEHNALFQALSSGNREELVRVIITASGGPFRTWAAADIEQATLAQALKHPNWSMGQKITIDSASMMNKGLEVIEASYLFALSPDEIDVLVHPQSIVHGMVEFSDRSVVAQLGAPDMRIPIAHCLGWPDRIAGPSARLDLAKIGTLTFEAPDFVRFPGLRLAYDSLRTGRGATTVYNAANEVAVAAFAAGQIRFGAIARLVEATLEHWTRSGNQAPLTSADDAIAIDHDARKTAAGLLPQIAAKAS.

NADPH contacts are provided by T25, G26, S27, I28, N53, and N136. K137 contributes to the 1-deoxy-D-xylulose 5-phosphate binding site. Residue E138 participates in NADPH binding. Residue D162 participates in Mn(2+) binding. 1-deoxy-D-xylulose 5-phosphate contacts are provided by S163, E164, S188, and H211. E164 provides a ligand contact to Mn(2+). G217 serves as a coordination point for NADPH. Residues S224, N229, K230, and E233 each contribute to the 1-deoxy-D-xylulose 5-phosphate site. E233 contributes to the Mn(2+) binding site.

Belongs to the DXR family. The cofactor is Mg(2+). It depends on Mn(2+) as a cofactor.

The enzyme catalyses 2-C-methyl-D-erythritol 4-phosphate + NADP(+) = 1-deoxy-D-xylulose 5-phosphate + NADPH + H(+). Its pathway is isoprenoid biosynthesis; isopentenyl diphosphate biosynthesis via DXP pathway; isopentenyl diphosphate from 1-deoxy-D-xylulose 5-phosphate: step 1/6. Its function is as follows. Catalyzes the NADPH-dependent rearrangement and reduction of 1-deoxy-D-xylulose-5-phosphate (DXP) to 2-C-methyl-D-erythritol 4-phosphate (MEP). The protein is 1-deoxy-D-xylulose 5-phosphate reductoisomerase of Bradyrhizobium sp. (strain BTAi1 / ATCC BAA-1182).